A 114-amino-acid polypeptide reads, in one-letter code: MIPGGGQPNMQQLLQQAQKMQQDLAAAQEELARTEVDGQAGGGLVKATVTGSGELRALVIDPKAVDPEDTETLADLVVAAVQAANENAQALQQEKLGPLAQGLGGGGGIPGLPF.

It belongs to the YbaB/EbfC family. Homodimer.

Its subcellular location is the cytoplasm. It localises to the nucleoid. In terms of biological role, binds to DNA and alters its conformation. May be involved in regulation of gene expression, nucleoid organization and DNA protection. This Streptomyces griseus subsp. griseus (strain JCM 4626 / CBS 651.72 / NBRC 13350 / KCC S-0626 / ISP 5235) protein is Nucleoid-associated protein SGR_3378.